The chain runs to 371 residues: NADH-ubiquinone oxidoreductase chain 1 (371 aa).

The next 10 membrane-spanning stretches (helical) occupy residues 7-27 (IISI…VAYV), 44-64 (PNAV…KLLL), 77-97 (LFFL…AVIP), 109-129 (LGIL…LLAG), 153-173 (LVLS…NLGV), 180-200 (AVLF…GSIA), 226-246 (AVVF…MCIL), 263-283 (VFNI…NWMV), 302-322 (GWLY…IFIL), and 338-358 (FCWT…PCIL).

The protein belongs to the complex I subunit 1 family.

The protein resides in the mitochondrion inner membrane. It carries out the reaction a ubiquinone + NADH + 5 H(+)(in) = a ubiquinol + NAD(+) + 4 H(+)(out). Its function is as follows. Core subunit of the mitochondrial membrane respiratory chain NADH dehydrogenase (Complex I) that is believed to belong to the minimal assembly required for catalysis. Complex I functions in the transfer of electrons from NADH to the respiratory chain. The immediate electron acceptor for the enzyme is believed to be ubiquinone. This Neurospora crassa (strain ATCC 24698 / 74-OR23-1A / CBS 708.71 / DSM 1257 / FGSC 987) protein is NADH-ubiquinone oxidoreductase chain 1 (ndh-1).